We begin with the raw amino-acid sequence, 111 residues long: UPF0145 protein RBAM_010660 (111 aa).

Belongs to the UPF0145 family.

The sequence is that of UPF0145 protein RBAM_010660 from Bacillus velezensis (strain DSM 23117 / BGSC 10A6 / LMG 26770 / FZB42) (Bacillus amyloliquefaciens subsp. plantarum).